The sequence spans 411 residues: Citrate synthase (411 aa).

Catalysis depends on residues histidine 304 and aspartate 363.

Belongs to the citrate synthase family.

It catalyses the reaction oxaloacetate + acetyl-CoA + H2O = citrate + CoA + H(+). The protein operates within carbohydrate metabolism; tricarboxylic acid cycle; isocitrate from oxaloacetate: step 1/2. The sequence is that of Citrate synthase (gltA) from Rickettsia akari.